The sequence spans 158 residues: Succinate dehydrogenase assembly factor 2, mitochondrial (158 aa).

The transit peptide at 1–23 (MLRQLLATARRLLLPLATPKRCL) directs the protein to the mitochondrion.

The protein belongs to the SDHAF2 family. As to quaternary structure, interacts with the flavoprotein subunit within the SDH catalytic dimer.

The protein resides in the mitochondrion matrix. Plays an essential role in the assembly of succinate dehydrogenase (SDH), an enzyme complex (also referred to as respiratory complex II) that is a component of both the tricarboxylic acid (TCA) cycle and the mitochondrial electron transport chain, and which couples the oxidation of succinate to fumarate with the reduction of ubiquinone (coenzyme Q) to ubiquinol. Required for flavinylation (covalent attachment of FAD) of the flavoprotein subunit of the SDH catalytic dimer. In Drosophila virilis (Fruit fly), this protein is Succinate dehydrogenase assembly factor 2, mitochondrial.